An 879-amino-acid chain; its full sequence is Alanine--tRNA ligase 1 (879 aa).

Residues His566, His570, Cys668, and His672 each contribute to the Zn(2+) site.

The protein belongs to the class-II aminoacyl-tRNA synthetase family. Requires Zn(2+) as cofactor.

The protein localises to the cytoplasm. It catalyses the reaction tRNA(Ala) + L-alanine + ATP = L-alanyl-tRNA(Ala) + AMP + diphosphate. Catalyzes the attachment of alanine to tRNA(Ala) in a two-step reaction: alanine is first activated by ATP to form Ala-AMP and then transferred to the acceptor end of tRNA(Ala). Also edits incorrectly charged Ser-tRNA(Ala) and Gly-tRNA(Ala) via its editing domain. The protein is Alanine--tRNA ligase 1 of Lachnoclostridium phytofermentans (strain ATCC 700394 / DSM 18823 / ISDg) (Clostridium phytofermentans).